A 178-amino-acid chain; its full sequence is Putative type II secretion system M-type protein YghD (178 aa).

Topologically, residues Met-1–Met-39 are cytoplasmic. Residues Leu-40–Leu-60 form a helical membrane-spanning segment. Over Ser-61–Gly-178 the chain is Periplasmic.

It belongs to the GSP M family.

The protein resides in the cell inner membrane. In terms of biological role, involved in a type II secretion system (T2SS, formerly general secretion pathway, GSP) for the export of folded proteins across the outer membrane. This chain is Putative type II secretion system M-type protein YghD (yghD), found in Escherichia coli (strain K12).